A 320-amino-acid chain; its full sequence is Protoheme IX farnesyltransferase (320 aa).

9 helical membrane passes run 38 to 58, 60 to 80, 109 to 129, 132 to 152, 159 to 179, 184 to 204, 222 to 242, 254 to 276, and 299 to 319; these read VIEL…RGFP, IGLI…AGVF, EALV…WFGA, LSAW…TMIL, NIVW…AAVT, WPAI…YWPL, AIAG…AMVA, GWVY…HALY, and YLTL…AIVG.

This sequence belongs to the UbiA prenyltransferase family. Protoheme IX farnesyltransferase subfamily.

It localises to the cell membrane. The enzyme catalyses heme b + (2E,6E)-farnesyl diphosphate + H2O = Fe(II)-heme o + diphosphate. Its pathway is porphyrin-containing compound metabolism; heme O biosynthesis; heme O from protoheme: step 1/1. Its function is as follows. Converts heme B (protoheme IX) to heme O by substitution of the vinyl group on carbon 2 of heme B porphyrin ring with a hydroxyethyl farnesyl side group. In Paenarthrobacter aurescens (strain TC1), this protein is Protoheme IX farnesyltransferase.